A 389-amino-acid chain; its full sequence is Smad nuclear interacting protein 1 (389 aa).

The span at 1–10 shows a compositional bias: basic and acidic residues; that stretch reads MKAGKSERER. Residues 1–212 are disordered; sequence MKAGKSERER…GNKNKEVPVK (212 aa). A Phosphoserine modification is found at S18. Residue K28 forms a Glycyl lysine isopeptide (Lys-Gly) (interchain with G-Cter in SUMO); alternate linkage. K28 is covalently cross-linked (Glycyl lysine isopeptide (Lys-Gly) (interchain with G-Cter in SUMO1); alternate). K28 participates in a covalent cross-link: Glycyl lysine isopeptide (Lys-Gly) (interchain with G-Cter in SUMO2); alternate. Residues 28–43 show a composition bias toward basic and acidic residues; sequence KQERLSPEPVAHRRPD. 2 positions are modified to phosphoserine: S33 and S48. Residues 54–72 are compositionally biased toward low complexity; sequence AESGSAGHRGSRARGASRS. Positions 73 to 95 are enriched in basic residues; that stretch reads PAKKKSKSSGRRSKSPRTKRSRS. The residue at position 95 (S95) is a Phosphoserine. Basic and acidic residues-rich tracts occupy residues 103–138 and 147–163; these read VKQE…ERDR and RSSD…DRDS. A Glycyl lysine isopeptide (Lys-Gly) (interchain with G-Cter in SUMO2) cross-link involves residue K104. The residue at position 149 (S149) is a Phosphoserine. Residues 166-197 adopt a coiled-coil conformation; sequence LQAQEEERDFNNARRREHRQQNESAGAEAQEV. A Glycyl lysine isopeptide (Lys-Gly) (interchain with G-Cter in SUMO2) cross-link involves residue K214. Positions 272–335 constitute an FHA domain; it reads YLLGRHRRIA…NGTFLNNKRI (64 aa). Residues 363 to 373 show a composition bias toward basic and acidic residues; the sequence is ESSDTSELDRK. Residues 363–389 are disordered; sequence ESSDTSELDRKEDEDEEEEEEMVSDSS. The segment covering 374-389 has biased composition (acidic residues); the sequence is EDEDEEEEEEMVSDSS. A Phosphoserine modification is found at S386.

As to quaternary structure, component of activated spliceosome complexes. Component of the minor spliceosome, which splices U12-type introns. Binds SMAD4 and CREBBP/EP300. Binds the SMAD1/OAZ1/PSMB4 complex. Interacts with DROSHA and SMARCA4. Component of the SNARP complex which consists at least of SNIP1, SNW1, THRAP3, BCLAF1 and PNN. Degraded by the proteasome upon binding to the SMAD1/OAZ1/PSMB4 complex.

It localises to the nucleus. Required for pre-mRNA splicing as component of the spliceosome. As a component of the minor spliceosome, involved in the splicing of U12-type introns in pre-mRNAs. Down-regulates NF-kappa-B signaling by competing with RELA for CREBBP/EP300 binding. Involved in the microRNA (miRNA) biogenesis. May be involved in cyclin-D1/CCND1 mRNA stability through the SNARP complex which associates with both the 3'end of the CCND1 gene and its mRNA. This chain is Smad nuclear interacting protein 1 (Snip1), found in Rattus norvegicus (Rat).